We begin with the raw amino-acid sequence, 342 residues long: Anthranilate phosphoribosyltransferase (342 aa).

Residues Gly-74, Gly-77–Asp-78, Thr-82, Asn-84–Thr-87, Lys-101–Gly-109, and Ser-113 contribute to the 5-phospho-alpha-D-ribose 1-diphosphate site. Anthranilate is bound at residue Gly-74. Ser-86 is a binding site for Mg(2+). Asn-104 is a binding site for anthranilate. Anthranilate is bound at residue Arg-159. Mg(2+) contacts are provided by Asp-218 and Glu-219.

It belongs to the anthranilate phosphoribosyltransferase family. In terms of assembly, homodimer. Requires Mg(2+) as cofactor.

The catalysed reaction is N-(5-phospho-beta-D-ribosyl)anthranilate + diphosphate = 5-phospho-alpha-D-ribose 1-diphosphate + anthranilate. Its pathway is amino-acid biosynthesis; L-tryptophan biosynthesis; L-tryptophan from chorismate: step 2/5. Functionally, catalyzes the transfer of the phosphoribosyl group of 5-phosphorylribose-1-pyrophosphate (PRPP) to anthranilate to yield N-(5'-phosphoribosyl)-anthranilate (PRA). The sequence is that of Anthranilate phosphoribosyltransferase from Sulfolobus acidocaldarius (strain ATCC 33909 / DSM 639 / JCM 8929 / NBRC 15157 / NCIMB 11770).